A 372-amino-acid chain; its full sequence is Ubiquitin carboxyl-terminal hydrolase 12 (372 aa).

Residues 39–371 (FGLVNFGNTC…SGYILFYQSR (333 aa)) enclose the USP domain. The active-site Nucleophile is the C48. The disordered stretch occupies residues 150 to 169 (NGRLANGSLDSQNHNSNAPP). The span at 157–166 (SLDSQNHNSN) shows a compositional bias: polar residues. C188, C191, C235, and C238 together coordinate Zn(2+). The active-site Proton acceptor is H319.

The protein belongs to the peptidase C19 family. USP12/USP46 subfamily. As to quaternary structure, interacts with WDR48.

The catalysed reaction is Thiol-dependent hydrolysis of ester, thioester, amide, peptide and isopeptide bonds formed by the C-terminal Gly of ubiquitin (a 76-residue protein attached to proteins as an intracellular targeting signal).. Functionally, deubiquitinating enzyme. Has almost no deubiquitinating activity by itself and requires the interaction with wdr48 to have a high activity. This Salmo salar (Atlantic salmon) protein is Ubiquitin carboxyl-terminal hydrolase 12 (usp12).